Reading from the N-terminus, the 155-residue chain is SsrA-binding protein (155 aa).

It belongs to the SmpB family.

It localises to the cytoplasm. Functionally, required for rescue of stalled ribosomes mediated by trans-translation. Binds to transfer-messenger RNA (tmRNA), required for stable association of tmRNA with ribosomes. tmRNA and SmpB together mimic tRNA shape, replacing the anticodon stem-loop with SmpB. tmRNA is encoded by the ssrA gene; the 2 termini fold to resemble tRNA(Ala) and it encodes a 'tag peptide', a short internal open reading frame. During trans-translation Ala-aminoacylated tmRNA acts like a tRNA, entering the A-site of stalled ribosomes, displacing the stalled mRNA. The ribosome then switches to translate the ORF on the tmRNA; the nascent peptide is terminated with the 'tag peptide' encoded by the tmRNA and targeted for degradation. The ribosome is freed to recommence translation, which seems to be the essential function of trans-translation. This is SsrA-binding protein from Helicobacter hepaticus (strain ATCC 51449 / 3B1).